The chain runs to 786 residues: Tyrosine-protein kinase Btk (786 aa).

The tract at residues 1–23 (MMGTKHRNSHVNGSIKSSSSLRS) is disordered. Over residues 14-23 (SIKSSSSLRS) the composition is skewed to low complexity. Positions 41 to 184 (DVVKSGSMVK…WIRAIRQVCE (144 aa)) constitute a PH domain. A Btk-type zinc finger spans residues 187-223 (NTPKSYRYHPGLWSGKKWSCCKGLSRTTFGCRAAAHW). Zn(2+) contacts are provided by His195, Cys206, Cys207, and Cys217. Over residues 226–240 (ANNNPSNGSSPAQNS) the composition is skewed to low complexity. The segment at 226 to 301 (ANNNPSNGSS…TPTSLQPQSS (76 aa)) is disordered. Residues 241-260 (TRSISPNSSTTNSQFSLQHN) show a composition bias toward polar residues. Gly residues predominate over residues 264-290 (SLGGGVGGGLGGGGSLGLGGGGGGGGS). Positions 291–301 (CTPTSLQPQSS) are enriched in polar residues. Residues 342–402 (HFVKLVVALY…PSNYVKPKAL (61 aa)) form the SH3 domain. In terms of domain architecture, SH2 spans 410–503 (WYVGDMSRQR…GLACRLKSSP (94 aa)). Residues 526-779 (LMLMEELGSG…FRVLMDQLAL (254 aa)) enclose the Protein kinase domain. ATP-binding positions include 532–540 (LGSGQFGVV) and Lys554. Asp647 functions as the Proton acceptor in the catalytic mechanism. Tyr677 is subject to Phosphotyrosine; by autocatalysis.

The protein belongs to the protein kinase superfamily. Tyr protein kinase family. TEC subfamily. It depends on Zn(2+) as a cofactor. Ring canals in the egg chambers and imaginal disks of third-instar larvae.

It carries out the reaction L-tyrosyl-[protein] + ATP = O-phospho-L-tyrosyl-[protein] + ADP + H(+). Required for proper ring canal development. Also required for the development of male genitalia and for adult survival. In Drosophila melanogaster (Fruit fly), this protein is Tyrosine-protein kinase Btk.